The sequence spans 136 residues: Large ribosomal subunit protein uL16 (136 aa).

Belongs to the universal ribosomal protein uL16 family. Part of the 50S ribosomal subunit.

Its function is as follows. Binds 23S rRNA and is also seen to make contacts with the A and possibly P site tRNAs. The chain is Large ribosomal subunit protein uL16 from Ehrlichia canis (strain Jake).